A 265-amino-acid polypeptide reads, in one-letter code: Thymidylate synthase (265 aa).

Arg21 is a binding site for dUMP. His51 provides a ligand contact to (6R)-5,10-methylene-5,6,7,8-tetrahydrofolate. DUMP is bound at residue 127 to 128; that stretch reads RR. Catalysis depends on Cys147, which acts as the Nucleophile. Residues 167–170, Asn178, and 208–210 each bind dUMP; these read RSAD and HLY. Asp170 contributes to the (6R)-5,10-methylene-5,6,7,8-tetrahydrofolate binding site. Position 264 (Ser264) interacts with (6R)-5,10-methylene-5,6,7,8-tetrahydrofolate.

It belongs to the thymidylate synthase family. Bacterial-type ThyA subfamily. In terms of assembly, homodimer.

It is found in the cytoplasm. The catalysed reaction is dUMP + (6R)-5,10-methylene-5,6,7,8-tetrahydrofolate = 7,8-dihydrofolate + dTMP. It functions in the pathway pyrimidine metabolism; dTTP biosynthesis. In terms of biological role, catalyzes the reductive methylation of 2'-deoxyuridine-5'-monophosphate (dUMP) to 2'-deoxythymidine-5'-monophosphate (dTMP) while utilizing 5,10-methylenetetrahydrofolate (mTHF) as the methyl donor and reductant in the reaction, yielding dihydrofolate (DHF) as a by-product. This enzymatic reaction provides an intracellular de novo source of dTMP, an essential precursor for DNA biosynthesis. This is Thymidylate synthase from Neisseria gonorrhoeae.